A 318-amino-acid polypeptide reads, in one-letter code: Probable ABC transporter permease protein MG189 (318 aa).

A run of 6 helical transmembrane segments spans residues 42-62, 98-118, 134-154, 169-189, 230-250, and 282-302; these read VLGFFGLIVIFPFYLMVVVSF, AIVVNTLVTVLSVLLTLFFTI, LVWFFFLSVLILPESALLIGQ, PLIVLGLIMPFVSSVFSGFMY, VGILTAFSAWNSYLWPLLLLG, and LKMSAAILAILPMFIIYFLFH. An ABC transmembrane type-1 domain is found at 99 to 301; the sequence is IVVNTLVTVL…LPMFIIYFLF (203 aa).

Belongs to the binding-protein-dependent transport system permease family. MalFG subfamily.

The protein resides in the cell membrane. Its function is as follows. Probably part of a binding-protein-dependent transport system. Probably responsible for the translocation of the substrate across the membrane. This Mycoplasma genitalium (strain ATCC 33530 / DSM 19775 / NCTC 10195 / G37) (Mycoplasmoides genitalium) protein is Probable ABC transporter permease protein MG189.